The chain runs to 159 residues: Transcription elongation factor A protein-like 1 (159 aa).

Residues methionine 1 to glutamate 99 form a disordered region. Positions lysine 17 to leucine 34 are enriched in basic and acidic residues. The span at glutamine 37–leucine 54 shows a compositional bias: acidic residues. Over residues serine 64–glutamate 80 the composition is skewed to basic and acidic residues.

It belongs to the TFS-II family. TFA subfamily.

The protein localises to the nucleus. May be involved in transcriptional regulation. Modulates various viral and cellular promoters in a promoter context-dependent manner. Does not bind DNA directly. The protein is Transcription elongation factor A protein-like 1 of Ateles geoffroyi (Black-handed spider monkey).